Here is a 514-residue protein sequence, read N- to C-terminus: Peptide chain release factor 3 (514 aa).

Residues 8–268 (KKRRTFAIIS…TFLKFAPEPH (261 aa)) form the tr-type G domain. Residues 17–24 (SHPDAGKT), 85–89 (DTPGH), and 139–142 (NKLD) contribute to the GTP site.

Belongs to the TRAFAC class translation factor GTPase superfamily. Classic translation factor GTPase family. PrfC subfamily.

The protein resides in the cytoplasm. Functionally, increases the formation of ribosomal termination complexes and stimulates activities of RF-1 and RF-2. It binds guanine nucleotides and has strong preference for UGA stop codons. It may interact directly with the ribosome. The stimulation of RF-1 and RF-2 is significantly reduced by GTP and GDP, but not by GMP. In Streptococcus thermophilus (strain CNRZ 1066), this protein is Peptide chain release factor 3.